Reading from the N-terminus, the 301-residue chain is MTVIMDGKKLAELRLIETKNDLLALKDKYQITVKLVIILVGNNDASLIYVNNKVAKAKAIGMDSEIIRLFEFIEEKKLFSVIDDLNCDSTVHGIIVQLPLPPHIDALKLFARIDSRKDVDGLNPINIGYLNIGANQGLIPCTALGCIDLLQYYVTGLKGKHVVVIGKSNIVGKPLSALLLRNSCTVTICHSATVDLALHTRTADIVISAVGKANFLTDKHFSGNLAFIDVGISHIYDLQTHKRKLVGDGDFLKIKDLVKFITPVPGGVGPMTVAYLLKNTLTAAKLIYASIIDNDNEKRLC.

NADP(+) is bound by residues 166 to 168 (GKS), Ser191, and Ile232.

Belongs to the tetrahydrofolate dehydrogenase/cyclohydrolase family. As to quaternary structure, homodimer.

The catalysed reaction is (6R)-5,10-methylene-5,6,7,8-tetrahydrofolate + NADP(+) = (6R)-5,10-methenyltetrahydrofolate + NADPH. It catalyses the reaction (6R)-5,10-methenyltetrahydrofolate + H2O = (6R)-10-formyltetrahydrofolate + H(+). Its pathway is one-carbon metabolism; tetrahydrofolate interconversion. Functionally, catalyzes the oxidation of 5,10-methylenetetrahydrofolate to 5,10-methenyltetrahydrofolate and then the hydrolysis of 5,10-methenyltetrahydrofolate to 10-formyltetrahydrofolate. The sequence is that of Bifunctional protein FolD from Orientia tsutsugamushi (strain Boryong) (Rickettsia tsutsugamushi).